We begin with the raw amino-acid sequence, 459 residues long: Vanillin aminotransferase (459 aa).

Residues 115-116 and Asp255 contribute to the pyridoxal 5'-phosphate site; that span reads GS. Residue Lys284 is modified to N6-(pyridoxal phosphate)lysine. 320–321 is a binding site for pyridoxal 5'-phosphate; that stretch reads FT. The stretch at 430–457 forms a coiled coil; the sequence is LEELDELIRIYGKALKDTEKRVEELKSQ.

It belongs to the class-III pyridoxal-phosphate-dependent aminotransferase family. Confined to the placenta of green fruits at high levels. Barely detectable in the pericarp and seeds as well as in the placenta of mature fruits.

The enzyme catalyses vanillin + L-alanine = vanillylamine + pyruvate. It participates in aromatic compound metabolism; phenylpropanoid biosynthesis. Its function is as follows. Involved in the biosynthesis of capsaicinoids natural products, pungent alkaloids synthesized from phenylpropanoid intermediates in the placental tissue of chili pepper fruit acting as repellant on herbivorous mammals and conferring spiciness to hot peppers. Can transfer an amine from vanillylamine to pyruvate forming vanillin and L-alanine. In Capsicum annuum (Capsicum pepper), this protein is Vanillin aminotransferase.